A 523-amino-acid chain; its full sequence is Probable aminopeptidase NPEPL1 (523 aa).

K260 and D265 together coordinate Zn(2+). The active site involves K272. Zn(2+)-binding residues include D283, D342, and E344. The active site involves R346.

The protein belongs to the peptidase M17 family. The cofactor is Zn(2+). Requires Mn(2+) as cofactor. Ubiquitously expressed.

Its function is as follows. Probably catalyzes the removal of unsubstituted N-terminal amino acids from various peptides. This Homo sapiens (Human) protein is Probable aminopeptidase NPEPL1 (NPEPL1).